Consider the following 1314-residue polypeptide: AT-rich interactive domain-containing protein 4B (1314 aa).

Disordered regions lie at residues 123-169 and 266-306; these read LPLT…RKQT and KTEL…EPFP. A phosphoserine mark is found at Ser276, Ser295, and Ser296. Over residues 277–305 the composition is skewed to acidic residues; the sequence is EAEEEEEEEDDEKEKEDNSSEEEEEIEPF. In terms of domain architecture, ARID spans 306-398; the sequence is PEERENFLQQ…YLYGFEEYCR (93 aa). Glycyl lysine isopeptide (Lys-Gly) (interchain with G-Cter in SUMO2) cross-links involve residues Lys428 and Lys461. Over residues 439–464 the composition is skewed to basic and acidic residues; the sequence is NVEDSKNVMPKEETPAEDESERKENI. 5 disordered regions span residues 439–577, 635–678, 709–888, 943–1215, and 1256–1290; these read NVED…KVQV, IKHR…SPEM, ASES…EEKR, KELF…RLPK, and VASIDRRRKRLKKKERESAATSSSSSSPSSSSITA. A Phosphoserine modification is found at Ser482. A compositionally biased stretch (basic and acidic residues) spans 486 to 511; the sequence is KEAHITKLEENENLEDKDGGRARTEE. The segment covering 531 to 567 has biased composition (acidic residues); that stretch reads NKEEDEDDEEIEEEEEEDEEEDEDEDDDDNNEEEEFE. Positions 572–624 constitute a Tudor-knot domain; sequence GMKVQVRYGRGKNQKMYEASIKDSDVEGGEALYLVHYCGWNVRYDEWIKADKI. The span at 643-656 shows a compositional bias: basic and acidic residues; sequence NKLDKEKDRDEKYS. Ser666, Ser668, Ser675, and Ser717 each carry phosphoserine. 2 stretches are compositionally biased toward basic and acidic residues: residues 722–754 and 778–787; these read ERCTQDVDNIGKDESKVEHSTHSRNELISKEEQ and SPERLRKDME. A Glycyl lysine isopeptide (Lys-Gly) (interchain with G-Cter in SUMO2) cross-link involves residue Lys751. Residues Ser778 and Ser790 each carry the phosphoserine modification. Over residues 788–800 the composition is skewed to acidic residues; that stretch reads AISEDTDFEEEDE. Thr793 carries the post-translational modification Phosphothreonine. Basic and acidic residues-rich tracts occupy residues 808–817, 841–853, and 997–1012; these read VKKDTTDKAL, GKKEDRTKSKEPL, and KPIEEKPLEVSDRKTE. A compositionally biased stretch (polar residues) spans 1013–1023; it reads FPSSGSNSVLN. Phosphoserine is present on Ser1016. The residue at position 1028 (Thr1028) is a Phosphothreonine. Positions 1030-1051 are enriched in low complexity; it reads ESPSSVTITEASQQQSSVTVSV. Residue Ser1031 is modified to Phosphoserine. The span at 1058-1067 shows a compositional bias: basic and acidic residues; sequence EEVRSIKSET. Residues 1089-1103 are compositionally biased toward low complexity; it reads SSPAGFDASVSSSSS. Basic residues predominate over residues 1132–1150; it reads KKQKRSHKATVVNNKKKGK. Thr1152 carries the phosphothreonine modification. Phosphoserine is present on residues Ser1154, Ser1155, Ser1157, and Ser1161. The segment covering 1164–1186 has biased composition (polar residues); that stretch reads ESVTKTQTIKSVPTGMKTHNSKS. Residues 1198 to 1210 are compositionally biased toward basic and acidic residues; that stretch reads RNGDKDPDLKEPS. Positions 1227 to 1272 form a coiled coil; that stretch reads ENMTSAERISILQEKLQEIRKHYLSLKSEVASIDRRRKRLKKKERE. A compositionally biased stretch (low complexity) spans 1274-1290; it reads AATSSSSSSPSSSSITA.

Component of a Sin3A corepressor complex consisting of SIN3A, SAP130, SUDS3/SAP45, SAP180, HDAC1 and HDAC2. Interacts with ARID4A. Interacts with AR. Expressed in Sertoli cells of the testis.

It is found in the nucleus. Its function is as follows. Acts as a transcriptional repressor. May function in the assembly and/or enzymatic activity of the Sin3A corepressor complex or in mediating interactions between the complex and other regulatory complexes. Plays a role in the regulation of epigenetic modifications at the PWS/AS imprinting center near the SNRPN promoter, where it might function as part of a complex with RB1 and ARID4A. Involved in spermatogenesis, together with ARID4A, where it functions as a transcriptional coactivator for AR (androgen receptor) and enhances expression of genes required for sperm maturation. Regulates expression of the tight junction protein CLDN3 in the testis, which is important for integrity of the blood-testis barrier. Plays a role in myeloid homeostasis where it regulates the histone methylation state of bone marrow cells and expression of various genes involved in hematopoiesis. May function as a leukemia suppressor. This is AT-rich interactive domain-containing protein 4B (Arid4b) from Mus musculus (Mouse).